A 270-amino-acid chain; its full sequence is Bacterial microcompartment shell protein PduB (270 aa).

The probable helix that binds cargo to the BMC shell stretch occupies residues 6 to 18 (LVEQIMAQVIARV). 2 BMC circularly permuted domains span residues 47-152 (EFVG…DRTF) and 154-258 (DVYG…LATL).

It belongs to the EutL/PduB family. As to quaternary structure, homotrimerizes to form a pseudohexamer with a central pore. The trimers pack into an array. In purified BMCs seen as a 28.0 kDa and 25.0 kDa form, both of which have been N-terminally sequenced and whose N-fMet is removed; the smaller form is called PduB'.

It localises to the bacterial microcompartment. Its pathway is polyol metabolism; 1,2-propanediol degradation. Its function is as follows. The two proteins produced are among the major shell proteins of the bacterial microcompartment (BMC) dedicated to 1,2-propanediol (1,2-PD) degradation. Required for structural integrity of BMCs and to mitigate propionaldehyde toxicity. The N-terminal 13 residues are important for correct assembly of the BMC shell. The isolated BMC shell component protein ratio for J:A:B':B:K:T:U is approximately 15:10:7:6:1:1:2. The N-terminus of the long form (PduB) is required for correct formation of BMCs, deletions in the first 37 residues have substantially reduced levels of the major lumen enzymes. May play a major role in binding the enzyme contents to the shell. Functionally, the 1,2-PD-specific bacterial microcompartment (BMC) concentrates low levels of 1,2-PD catabolic enzymes, concentrates volatile reaction intermediates thus enhancing pathway flux and keeps the level of toxic, mutagenic propionaldehyde low. This Salmonella typhimurium (strain LT2 / SGSC1412 / ATCC 700720) protein is Bacterial microcompartment shell protein PduB.